Reading from the N-terminus, the 203-residue chain is Holliday junction branch migration complex subunit RuvA (203 aa).

The segment at 1–63 is domain I; it reads MIDYLRGTLT…EDVIRLYGFR (63 aa). Residues 64 to 142 form a domain II region; it reads TKEKRSLFEK…ELHPGLFSQK (79 aa). A flexible linker region spans residues 143–152; that stretch reads EEQPKPHEKN. A domain III region spans residues 153–203; it reads DGNQALDEAMEALKALGYVEKELKKVKPKLEQETLTTDAYIKKALQLMLNR.

It belongs to the RuvA family. In terms of assembly, homotetramer. Forms an RuvA(8)-RuvB(12)-Holliday junction (HJ) complex. HJ DNA is sandwiched between 2 RuvA tetramers; dsDNA enters through RuvA and exits via RuvB. An RuvB hexamer assembles on each DNA strand where it exits the tetramer. Each RuvB hexamer is contacted by two RuvA subunits (via domain III) on 2 adjacent RuvB subunits; this complex drives branch migration. In the full resolvosome a probable DNA-RuvA(4)-RuvB(12)-RuvC(2) complex forms which resolves the HJ.

It is found in the cytoplasm. Its function is as follows. The RuvA-RuvB-RuvC complex processes Holliday junction (HJ) DNA during genetic recombination and DNA repair, while the RuvA-RuvB complex plays an important role in the rescue of blocked DNA replication forks via replication fork reversal (RFR). RuvA specifically binds to HJ cruciform DNA, conferring on it an open structure. The RuvB hexamer acts as an ATP-dependent pump, pulling dsDNA into and through the RuvAB complex. HJ branch migration allows RuvC to scan DNA until it finds its consensus sequence, where it cleaves and resolves the cruciform DNA. This is Holliday junction branch migration complex subunit RuvA from Halalkalibacterium halodurans (strain ATCC BAA-125 / DSM 18197 / FERM 7344 / JCM 9153 / C-125) (Bacillus halodurans).